The following is a 339-amino-acid chain: Phenylalanine--tRNA ligase alpha subunit (339 aa).

Residue Glu-254 participates in Mg(2+) binding.

It belongs to the class-II aminoacyl-tRNA synthetase family. Phe-tRNA synthetase alpha subunit type 1 subfamily. As to quaternary structure, tetramer of two alpha and two beta subunits. It depends on Mg(2+) as a cofactor.

The protein localises to the cytoplasm. The catalysed reaction is tRNA(Phe) + L-phenylalanine + ATP = L-phenylalanyl-tRNA(Phe) + AMP + diphosphate + H(+). This chain is Phenylalanine--tRNA ligase alpha subunit, found in Clostridium acetobutylicum (strain ATCC 824 / DSM 792 / JCM 1419 / IAM 19013 / LMG 5710 / NBRC 13948 / NRRL B-527 / VKM B-1787 / 2291 / W).